The primary structure comprises 221 residues: Ribosomal RNA small subunit methyltransferase Nep1 (221 aa).

Residues G174, G179, and L196–M201 contribute to the S-adenosyl-L-methionine site.

Belongs to the class IV-like SAM-binding methyltransferase superfamily. RNA methyltransferase NEP1 family. In terms of assembly, homodimer.

The catalysed reaction is a pseudouridine in rRNA + S-adenosyl-L-methionine = an N(1)-methylpseudouridine in rRNA + S-adenosyl-L-homocysteine + H(+). Its function is as follows. Methyltransferase involved in ribosomal biogenesis. Specifically catalyzes the N1-methylation of the pseudouridine corresponding to position 914 in M.jannaschii 16S rRNA. This chain is Ribosomal RNA small subunit methyltransferase Nep1, found in Pyrobaculum arsenaticum (strain DSM 13514 / JCM 11321 / PZ6).